Consider the following 802-residue polypeptide: MTIRSLNLFIIDKKHQHKSSLSSFQNCKLGIDASFYLTQIIHSFTPQELQSLAVNGESEYLQHRISEFLEQLRTENITPIFVFNGIPLTFEASSQLEVPGKQKSHSALTDFEAFDPYDANIQRNMYRMDASGPANYGESKPTLLYTNQRDHLDRLCDQVKFYLDQCNVEYFVAPYLAMAQLAYFLNGTSSPYIDAIYGSTDLLLFGVKKFITSMNTSSNVKISSDPSSPSTQTTINSAAKSSFTWLDGNALLQDTNGLSWQQFIDSCLLCGTAISPTFPQIEGTFLIKSAMELVRMFGSAYRAVLHFAEIFPQPIFQDYLQQYKRAVCFSKFGIVMDTKGLTLPPVPTESVPNDINIYFGTRLPNEIYFYISRGLIPCKMIGALVSGCFSDPVSILEQHIGDKASQGTFSGANSGLNPGRDNAAAVAAVDQRRFVDDLEEIWSQGLNLLTQPLNRFYQARDIVSLHGHNQQASLKVMHSYDPPLYNDTRAWMIYEENLPSYLSSNFLKEEPVVLFDLLRALNDPVFVKKSFCTEGNIGIKNPPKHPLSSTAEIVLSSCYRFLQIRSFVLTSHQLTSWGCPLLKALENCHLQNQTSVVVLFELLRLRQLKEPSLLSSSSASIADLSITSATEFLAKVATFLPIKQRPEVSKISIVDENLLQFYQLQTSFGSNLKELMAMILASVILNRNVDKSKIDPKLIRKTLPFQNINGSLVSGFVVKRFFEIISKEQEASSQQENIQKAYEIIEKEFPTIGSAENHIAQFLEFWKTFMEGVKEAENTSAIGKLVLSKLFLTNQWIFSLGL.

Ser-227, Ser-228, and Ser-230 each carry phosphoserine.

Belongs to the XPG/RAD2 endonuclease family. Interacts with pab1 binding protein ath1.

Its function is as follows. Involved in post-transcriptional regulation of gene expression by 3'-UTR-mediated RNA regulation. Promotes interactions between mRNA and poly(A)-binding protein. Binds the 3' UTR of mRNAs, centromeric transcripts and antisense-rDNA. Required for the establishment but not the maintenance of heterochromatin at pericentromeres, and for the maintenance of small domains of facultative heterochromatin known as HOODs. This Schizosaccharomyces pombe (strain 972 / ATCC 24843) (Fission yeast) protein is Post-transcriptional regulator mkt1.